The chain runs to 217 residues: Ras-related protein RGP2 (217 aa).

Residues 19 to 26 (GDSGVGKS), 67 to 71 (DTAGQ), and 125 to 128 (NKSD) each bind GTP. S-geranylgeranyl cysteine attachment occurs at residues C214 and C215.

The protein belongs to the small GTPase superfamily. Rab family.

The protein localises to the cell membrane. The protein is Ras-related protein RGP2 (RGP2) of Oryza sativa subsp. japonica (Rice).